We begin with the raw amino-acid sequence, 541 residues long: Amino-acid permease 2 (541 aa).

Positions 1–22 (MSFSPPNKSADATIQITEMTRQ) are enriched in polar residues. The disordered stretch occupies residues 1–43 (MSFSPPNKSADATIQITEMTRQGTPSSGEAAASTPSTSSTESG). A compositionally biased stretch (low complexity) spans 23-41 (GTPSSGEAAASTPSTSSTE). 12 consecutive transmembrane segments (helical) span residues 66 to 86 (FSFA…WIYG), 90 to 110 (GGAA…WALA), 139 to 159 (VPFL…AGGA), 188 to 208 (VVGV…LPTA), 214 to 234 (TSGY…TLLV), 255 to 275 (GWSP…WIMT), 301 to 321 (ATTF…VCMG), 347 to 367 (PAIF…IPGI), 399 to 419 (PLIA…LGLA), 424 to 444 (IGAV…IPII), 464 to 484 (VWVN…FFFP), and 496 to 516 (YAIV…YTHG).

This sequence belongs to the amino acid-polyamine-organocation (APC) superfamily.

Its subcellular location is the membrane. This is Amino-acid permease 2 (aap-2) from Neurospora crassa (strain ATCC 24698 / 74-OR23-1A / CBS 708.71 / DSM 1257 / FGSC 987).